A 396-amino-acid chain; its full sequence is Cytochrome b (396 aa).

4 helical membrane-spanning segments follow: residues 32–52 (FGSL…TLAM), 76–98 (WLLR…LHIG), 113–133 (LWSI…IGYV), and 179–199 (FFSL…MHLL). Heme b is bound by residues His-82 and His-96. Residues His-183 and His-197 each contribute to the heme b site. Position 202 (His-202) interacts with a ubiquinone. Helical transmembrane passes span 225-245 (FTSK…IFVF), 289-309 (LGGV…ALIH), 321-341 (LLNL…WVGA), and 348-368 (YILI…ILMI).

This sequence belongs to the cytochrome b family. In terms of assembly, fungal cytochrome b-c1 complex contains 10 subunits; 3 respiratory subunits, 2 core proteins and 5 low-molecular weight proteins. Cytochrome b-c1 complex is a homodimer. It depends on heme b as a cofactor.

It localises to the mitochondrion inner membrane. Its function is as follows. Component of the ubiquinol-cytochrome c reductase complex (complex III or cytochrome b-c1 complex) that is part of the mitochondrial respiratory chain. The b-c1 complex mediates electron transfer from ubiquinol to cytochrome c. Contributes to the generation of a proton gradient across the mitochondrial membrane that is then used for ATP synthesis. This chain is Cytochrome b (cob), found in Spizellomyces punctatus.